A 100-amino-acid chain; its full sequence is MNNMNINEMLKQAKKMQSEIELKEKELYKKEFTIEKQGLTLVLNGKREVLKIDINEALVDPEDKDILEDLLLLAFNEAMEKIDEAHKEIEKQIPSGKLPF.

It belongs to the YbaB/EbfC family. Homodimer.

It is found in the cytoplasm. It localises to the nucleoid. Its function is as follows. Binds to DNA and alters its conformation. May be involved in regulation of gene expression, nucleoid organization and DNA protection. This Mycoplasmopsis pulmonis (strain UAB CTIP) (Mycoplasma pulmonis) protein is Nucleoid-associated protein MYPU_0500.